The primary structure comprises 419 residues: UDP-N-acetylglucosamine 1-carboxyvinyltransferase (419 aa).

Residue 22-23 (KN) coordinates phosphoenolpyruvate. Arginine 92 lines the UDP-N-acetyl-alpha-D-glucosamine pocket. The active-site Proton donor is cysteine 116. Cysteine 116 carries the post-translational modification 2-(S-cysteinyl)pyruvic acid O-phosphothioketal. UDP-N-acetyl-alpha-D-glucosamine is bound by residues aspartate 307 and valine 329.

This sequence belongs to the EPSP synthase family. MurA subfamily.

Its subcellular location is the cytoplasm. The catalysed reaction is phosphoenolpyruvate + UDP-N-acetyl-alpha-D-glucosamine = UDP-N-acetyl-3-O-(1-carboxyvinyl)-alpha-D-glucosamine + phosphate. Its pathway is cell wall biogenesis; peptidoglycan biosynthesis. In terms of biological role, cell wall formation. Adds enolpyruvyl to UDP-N-acetylglucosamine. In Pseudothermotoga lettingae (strain ATCC BAA-301 / DSM 14385 / NBRC 107922 / TMO) (Thermotoga lettingae), this protein is UDP-N-acetylglucosamine 1-carboxyvinyltransferase.